Reading from the N-terminus, the 113-residue chain is MNMTLNKRWCLTAILALSAVVYTSSSYAATDRLVIESGDSAQSRQQASMEKEQWNDTRSLRQKVNKRAEKEWDKADVAFDAQDNCQKSANVNAYWEPNTLRCLDRRTGRAINP.

The first 28 residues, 1–28, serve as a signal peptide directing secretion; the sequence is MNMTLNKRWCLTAILALSAVVYTSSSYA. A disordered region spans residues 38-60; sequence GDSAQSRQQASMEKEQWNDTRSL. The segment covering 39 to 48 has biased composition (polar residues); the sequence is DSAQSRQQAS. Over residues 49–59 the composition is skewed to basic and acidic residues; that stretch reads MEKEQWNDTRS.

This sequence belongs to the UPF0482 family.

The protein is UPF0482 protein KPN78578_15540 of Klebsiella pneumoniae subsp. pneumoniae (strain ATCC 700721 / MGH 78578).